The sequence spans 239 residues: 7-cyano-7-deazaguanine synthase (239 aa).

Residue 13–23 participates in ATP binding; that stretch reads LSGGLDSMVTA. 4 residues coordinate Zn(2+): cysteine 193, cysteine 203, cysteine 206, and cysteine 209.

It belongs to the QueC family. Zn(2+) is required as a cofactor.

The catalysed reaction is 7-carboxy-7-deazaguanine + NH4(+) + ATP = 7-cyano-7-deazaguanine + ADP + phosphate + H2O + H(+). It participates in purine metabolism; 7-cyano-7-deazaguanine biosynthesis. Catalyzes the ATP-dependent conversion of 7-carboxy-7-deazaguanine (CDG) to 7-cyano-7-deazaguanine (preQ(0)). This Erythrobacter litoralis (strain HTCC2594) protein is 7-cyano-7-deazaguanine synthase.